We begin with the raw amino-acid sequence, 610 residues long: Dihydroxy-acid dehydratase (610 aa).

A Mg(2+)-binding site is contributed by aspartate 81. Cysteine 122 serves as a coordination point for [2Fe-2S] cluster. The Mg(2+) site is built by aspartate 123 and lysine 124. Lysine 124 carries the post-translational modification N6-carboxylysine. Cysteine 193 provides a ligand contact to [2Fe-2S] cluster. Glutamate 489 lines the Mg(2+) pocket. Serine 515 acts as the Proton acceptor in catalysis.

It belongs to the IlvD/Edd family. In terms of assembly, homodimer. Requires [2Fe-2S] cluster as cofactor. Mg(2+) is required as a cofactor.

It catalyses the reaction (2R)-2,3-dihydroxy-3-methylbutanoate = 3-methyl-2-oxobutanoate + H2O. The catalysed reaction is (2R,3R)-2,3-dihydroxy-3-methylpentanoate = (S)-3-methyl-2-oxopentanoate + H2O. It participates in amino-acid biosynthesis; L-isoleucine biosynthesis; L-isoleucine from 2-oxobutanoate: step 3/4. Its pathway is amino-acid biosynthesis; L-valine biosynthesis; L-valine from pyruvate: step 3/4. Functions in the biosynthesis of branched-chain amino acids. Catalyzes the dehydration of (2R,3R)-2,3-dihydroxy-3-methylpentanoate (2,3-dihydroxy-3-methylvalerate) into 2-oxo-3-methylpentanoate (2-oxo-3-methylvalerate) and of (2R)-2,3-dihydroxy-3-methylbutanoate (2,3-dihydroxyisovalerate) into 2-oxo-3-methylbutanoate (2-oxoisovalerate), the penultimate precursor to L-isoleucine and L-valine, respectively. This Xylella fastidiosa (strain 9a5c) protein is Dihydroxy-acid dehydratase.